The chain runs to 753 residues: 5-methyltetrahydropteroyltriglutamate--homocysteine methyltransferase (753 aa).

5-methyltetrahydropteroyltri-L-glutamate contacts are provided by residues 17–20 (RELK) and Lys117. L-homocysteine contacts are provided by residues 431-433 (IGS) and Glu484. L-methionine is bound by residues 431–433 (IGS) and Glu484. Residues 515 to 516 (RC) and Trp561 contribute to the 5-methyltetrahydropteroyltri-L-glutamate site. Asp599 contributes to the L-homocysteine binding site. Asp599 lines the L-methionine pocket. Glu605 serves as a coordination point for 5-methyltetrahydropteroyltri-L-glutamate. The Zn(2+) site is built by His641, Cys643, and Glu665. The active-site Proton donor is His694. Residue Cys726 participates in Zn(2+) binding.

It belongs to the vitamin-B12 independent methionine synthase family. Zn(2+) serves as cofactor.

It carries out the reaction 5-methyltetrahydropteroyltri-L-glutamate + L-homocysteine = tetrahydropteroyltri-L-glutamate + L-methionine. The protein operates within amino-acid biosynthesis; L-methionine biosynthesis via de novo pathway; L-methionine from L-homocysteine (MetE route): step 1/1. Functionally, catalyzes the transfer of a methyl group from 5-methyltetrahydrofolate to homocysteine resulting in methionine formation. In Escherichia coli O1:K1 / APEC, this protein is 5-methyltetrahydropteroyltriglutamate--homocysteine methyltransferase.